The sequence spans 215 residues: UPF0502 protein YceH (215 aa).

At K80 the chain carries N6-acetyllysine.

The protein belongs to the UPF0502 family.

This Shigella sonnei (strain Ss046) protein is UPF0502 protein YceH.